The following is a 124-amino-acid chain: Small ribosomal subunit protein uS12 (124 aa).

Residues 1 to 28 are disordered; the sequence is MPTIQQLIRTERQSSKAKTKSPALKSCP. Aspartate 89 carries the 3-methylthioaspartic acid modification. Residues 104 to 124 are disordered; sequence TAGVKDRRQSRSKYGAKTPKE.

It belongs to the universal ribosomal protein uS12 family. Part of the 30S ribosomal subunit. Contacts proteins S8 and S17. May interact with IF1 in the 30S initiation complex.

With S4 and S5 plays an important role in translational accuracy. Its function is as follows. Interacts with and stabilizes bases of the 16S rRNA that are involved in tRNA selection in the A site and with the mRNA backbone. Located at the interface of the 30S and 50S subunits, it traverses the body of the 30S subunit contacting proteins on the other side and probably holding the rRNA structure together. The combined cluster of proteins S8, S12 and S17 appears to hold together the shoulder and platform of the 30S subunit. In Synechococcus sp. (strain WH7803), this protein is Small ribosomal subunit protein uS12.